The chain runs to 581 residues: Prolactin receptor (581 aa).

An N-terminal signal peptide occupies residues 1–24 (MKENAASRVVFILLLFLSVSLLNG). The Extracellular segment spans residues 25–237 (QSPPEKPKLV…NDFPVKDTSM (213 aa)). 2 consecutive Fibronectin type-III domains span residues 27–127 (PPEK…IVEP) and 129–229 (PPAN…IPND). The cysteines at positions 36 and 46 are disulfide-linked. Residue N59 is glycosylated (N-linked (GlcNAc...) asparagine). The cysteines at positions 75 and 86 are disulfide-linked. The N-linked (GlcNAc...) asparagine glycan is linked to N132. Residues D211 and H212 each contribute to the Zn(2+) site. The WSXWS motif motif lies at 215–219 (WSEWS). Residues 238–258 (WIFVAILSAVICLIMVWAVAL) form a helical membrane-spanning segment. Topologically, residues 259 to 581 (KGYSMVTCIL…PAKKAPPALP (323 aa)) are cytoplasmic. Positions 267–275 (ILPPVPGPK) match the Box 1 motif motif. 2 disordered regions span residues 324–384 (QLMP…EKLE) and 458–499 (DQHA…PRPQ). Basic and acidic residues-rich tracts occupy residues 329–349 (PSKE…DSDS), 375–384 (HTPEGPEKLE), and 469–483 (ETGR…RESE).

This sequence belongs to the type I cytokine receptor family. Type 1 subfamily. Interacts with SMARCA1. Interacts with NEK3 and VAV2 and this interaction is prolactin-dependent. As to expression, expressed in all tissues examined; liver, peripheral blood lymphocytes, endometrium, corpus luteum, intestine, fetal thymus, fetal spleen, fetal liver and fetal brain.

The protein resides in the membrane. In terms of biological role, this is a receptor for the anterior pituitary hormone prolactin. This chain is Prolactin receptor (PRLR), found in Bos taurus (Bovine).